The chain runs to 405 residues: Zinc finger protein ubi-d4 (405 aa).

Disordered stretches follow at residues 80 to 147, 165 to 194, 210 to 230, and 248 to 280; these read RKKR…GEFP, DDLD…GGAR, ACDN…VCGK, and AEEE…PDGL. 2 stretches are compositionally biased toward basic and acidic residues: residues 100–110 and 126–140; these read PDTDQTLKKEG and DPLE…RMDD. Acidic residues predominate over residues 165 to 174; the sequence is DDLDDEDYEE. A C2H2-type; atypical zinc finger spans residues 209-246; that stretch reads YACDNSYKQKHSLKPPDRVCGKRYKNRPGLSYHYAHSH. Residues 267-277 show a composition bias toward basic and acidic residues; it reads RSEEQKSKKGP. PHD-type zinc fingers lie at residues 284–344 and 341–391; these read NNYC…CKCC and CKCC…CLDL.

Belongs to the requiem/DPF family.

The protein resides in the cytoplasm. The protein localises to the nucleus. Its function is as follows. May be a transcription factor required for the apoptosis response following survival factor withdrawal from myeloid cells. Might also have a role in the development and maturation of lymphoid cells. The sequence is that of Zinc finger protein ubi-d4 (REQ) from Gallus gallus (Chicken).